Consider the following 322-residue polypeptide: Cytochrome f (322 aa).

A signal peptide spans 1-35 (MQTRNTFSWTWIREEITRSISVSLMIYIITWSSIS). Heme is bound by residues Y38, C58, C61, and H62. Residues 288–308 (VQGLLFFLGSVVLAQIFLVLK) traverse the membrane as a helical segment.

The protein belongs to the cytochrome f family. The 4 large subunits of the cytochrome b6-f complex are cytochrome b6, subunit IV (17 kDa polypeptide, petD), cytochrome f and the Rieske protein, while the 4 small subunits are PetG, PetL, PetM and PetN. The complex functions as a dimer. The cofactor is heme.

It localises to the plastid. The protein localises to the chloroplast thylakoid membrane. Functionally, component of the cytochrome b6-f complex, which mediates electron transfer between photosystem II (PSII) and photosystem I (PSI), cyclic electron flow around PSI, and state transitions. This is Cytochrome f from Aethionema cordifolium (Lebanon stonecress).